Reading from the N-terminus, the 170-residue chain is Cysteine-rich uncharacterized protein 241L (170 aa).

The chain is Cysteine-rich uncharacterized protein 241L from Acheta domesticus (House cricket).